We begin with the raw amino-acid sequence, 160 residues long: SsrA-binding protein (160 aa).

This sequence belongs to the SmpB family.

Its subcellular location is the cytoplasm. Required for rescue of stalled ribosomes mediated by trans-translation. Binds to transfer-messenger RNA (tmRNA), required for stable association of tmRNA with ribosomes. tmRNA and SmpB together mimic tRNA shape, replacing the anticodon stem-loop with SmpB. tmRNA is encoded by the ssrA gene; the 2 termini fold to resemble tRNA(Ala) and it encodes a 'tag peptide', a short internal open reading frame. During trans-translation Ala-aminoacylated tmRNA acts like a tRNA, entering the A-site of stalled ribosomes, displacing the stalled mRNA. The ribosome then switches to translate the ORF on the tmRNA; the nascent peptide is terminated with the 'tag peptide' encoded by the tmRNA and targeted for degradation. The ribosome is freed to recommence translation, which seems to be the essential function of trans-translation. The protein is SsrA-binding protein of Erwinia tasmaniensis (strain DSM 17950 / CFBP 7177 / CIP 109463 / NCPPB 4357 / Et1/99).